The primary structure comprises 262 residues: Octanoyltransferase (262 aa).

The BPL/LPL catalytic domain maps to 41-232 (PQLPDGLLLL…SFCQVFGLQA (192 aa)). Substrate-binding positions include 96–103 (RGGEVTYH), 163–165 (AIG), and 176–178 (GFA). Cys-194 acts as the Acyl-thioester intermediate in catalysis.

The protein belongs to the LipB family.

It localises to the cytoplasm. The enzyme catalyses octanoyl-[ACP] + L-lysyl-[protein] = N(6)-octanoyl-L-lysyl-[protein] + holo-[ACP] + H(+). Its pathway is protein modification; protein lipoylation via endogenous pathway; protein N(6)-(lipoyl)lysine from octanoyl-[acyl-carrier-protein]: step 1/2. In terms of biological role, catalyzes the transfer of endogenously produced octanoic acid from octanoyl-acyl-carrier-protein onto the lipoyl domains of lipoate-dependent enzymes. Lipoyl-ACP can also act as a substrate although octanoyl-ACP is likely to be the physiological substrate. The polypeptide is Octanoyltransferase (Synechococcus sp. (strain JA-2-3B'a(2-13)) (Cyanobacteria bacterium Yellowstone B-Prime)).